We begin with the raw amino-acid sequence, 301 residues long: Ribosomal RNA small subunit methyltransferase H (301 aa).

S-adenosyl-L-methionine is bound by residues 35–37 (GGH), aspartate 55, phenylalanine 84, aspartate 105, and glutamine 112.

This sequence belongs to the methyltransferase superfamily. RsmH family.

It localises to the cytoplasm. It catalyses the reaction cytidine(1402) in 16S rRNA + S-adenosyl-L-methionine = N(4)-methylcytidine(1402) in 16S rRNA + S-adenosyl-L-homocysteine + H(+). Its function is as follows. Specifically methylates the N4 position of cytidine in position 1402 (C1402) of 16S rRNA. This chain is Ribosomal RNA small subunit methyltransferase H, found in Chloroflexus aggregans (strain MD-66 / DSM 9485).